The chain runs to 198 residues: Probable chemoreceptor glutamine deamidase CheD (198 aa).

The protein belongs to the CheD family.

It carries out the reaction L-glutaminyl-[protein] + H2O = L-glutamyl-[protein] + NH4(+). Its function is as follows. Probably deamidates glutamine residues to glutamate on methyl-accepting chemotaxis receptors (MCPs), playing an important role in chemotaxis. This is Probable chemoreceptor glutamine deamidase CheD from Stenotrophomonas maltophilia (strain R551-3).